The following is a 310-amino-acid chain: Iron ABC transporter substrate-binding lipoprotein MtsA (310 aa).

The first 20 residues, 1 to 20 (MGKRMSLILGAFLSVFLLVA), serve as a signal peptide directing secretion. C21 carries the N-palmitoyl cysteine lipid modification. C21 is lipidated: S-diacylglycerol cysteine. H68, H140, E206, and D281 together coordinate Fe(2+).

This sequence belongs to the bacterial solute-binding protein 9 family. Lipoprotein receptor antigen (Lrai) subfamily.

It localises to the cell membrane. In terms of biological role, part of the ATP-binding cassette (ABC) transport system MtsABC involved in iron import. Binds iron with high affinity and specificity and delivers it to the membrane permease for translocation into the cytoplasm. Has low affinity for Zn(2+) and Cu(2+). This is Iron ABC transporter substrate-binding lipoprotein MtsA (mtsA) from Streptococcus pyogenes serotype M1.